Consider the following 251-residue polypeptide: Ubiquinone/menaquinone biosynthesis C-methyltransferase UbiE (251 aa).

S-adenosyl-L-methionine-binding positions include threonine 74, aspartate 95, 123–124, and serine 140; that span reads NA.

This sequence belongs to the class I-like SAM-binding methyltransferase superfamily. MenG/UbiE family.

It carries out the reaction a 2-demethylmenaquinol + S-adenosyl-L-methionine = a menaquinol + S-adenosyl-L-homocysteine + H(+). It catalyses the reaction a 2-methoxy-6-(all-trans-polyprenyl)benzene-1,4-diol + S-adenosyl-L-methionine = a 5-methoxy-2-methyl-3-(all-trans-polyprenyl)benzene-1,4-diol + S-adenosyl-L-homocysteine + H(+). Its pathway is quinol/quinone metabolism; menaquinone biosynthesis; menaquinol from 1,4-dihydroxy-2-naphthoate: step 2/2. The protein operates within cofactor biosynthesis; ubiquinone biosynthesis. Functionally, methyltransferase required for the conversion of demethylmenaquinol (DMKH2) to menaquinol (MKH2) and the conversion of 2-polyprenyl-6-methoxy-1,4-benzoquinol (DDMQH2) to 2-polyprenyl-3-methyl-6-methoxy-1,4-benzoquinol (DMQH2). This Yersinia pestis bv. Antiqua (strain Angola) protein is Ubiquinone/menaquinone biosynthesis C-methyltransferase UbiE.